Reading from the N-terminus, the 461-residue chain is Cysteine--tRNA ligase (461 aa).

Cys30 is a binding site for Zn(2+). Positions 32 to 42 (VTIYDLCHIGH) match the 'HIGH' region motif. The Zn(2+) site is built by Cys211, His236, and Glu240. A 'KMSKS' region motif is present at residues 268 to 272 (KMSKS). An ATP-binding site is contributed by Lys271.

This sequence belongs to the class-I aminoacyl-tRNA synthetase family. As to quaternary structure, monomer. It depends on Zn(2+) as a cofactor.

Its subcellular location is the cytoplasm. It carries out the reaction tRNA(Cys) + L-cysteine + ATP = L-cysteinyl-tRNA(Cys) + AMP + diphosphate. The chain is Cysteine--tRNA ligase from Shewanella putrefaciens (strain CN-32 / ATCC BAA-453).